The chain runs to 366 residues: Class I histocompatibility antigen, Gogo-C*0202 alpha chain (366 aa).

The signal sequence occupies residues 1 to 24 (MRVMAPRTLILLLSGALALTETWA). The segment at 25-114 (GSHSMRYFYT…LRGYYNQSED (90 aa)) is alpha-1. The Extracellular segment spans residues 25 to 308 (GSHSMRYFYT…EPSSQPTIPI (284 aa)). A glycan (N-linked (GlcNAc...) asparagine) is linked at Asn110. The alpha-2 stretch occupies residues 115–206 (GSHTLQSMYG…ENGKETLQRA (92 aa)). Intrachain disulfides connect Cys125–Cys188 and Cys227–Cys283. Residues 207 to 298 (EPPKTHVTHH…GLPEPLTLRW (92 aa)) form an alpha-3 region. In terms of domain architecture, Ig-like C1-type spans 209–297 (PKTHVTHHPL…EGLPEPLTLR (89 aa)). The connecting peptide stretch occupies residues 299–308 (EPSSQPTIPI). A helical transmembrane segment spans residues 309 to 332 (VGIVVGLAVLVVLAVLGAVVTAMM). Residues 333–366 (CRRKSSGGKGGSCSQAACSNSAQGSDESLITCKA) lie on the Cytoplasmic side of the membrane.

Belongs to the MHC class I family. In terms of assembly, heterodimer of an alpha chain and a beta chain (beta-2-microglobulin).

The protein localises to the membrane. Its function is as follows. Involved in the presentation of foreign antigens to the immune system. In Gorilla gorilla gorilla (Western lowland gorilla), this protein is Class I histocompatibility antigen, Gogo-C*0202 alpha chain.